The primary structure comprises 341 residues: MAKVYYNGDANEQYLQGKTVAIIGYGSQGHAHAQNLRDSGVRVIVGLRKGKSWEQAEQDGFEVYSVREAAKQADIVMVLLPDEKQPAVYKEEIEPELEPGNALVFAHGFNIHFSQIVPPNHVDVFLVAPKGPGHLVRRTYTEGAGVPALIAVYQDVTGHARETALAYAKAIGAARAGVLETTFKEETETDLFGEQAVLCGGLTALIKAGFETLVEAGYQPEVAYFECLHEMKLIVDLLYEGGLSWMRYSISDTAQWGDFITGPRIINDAVKAEMKKVLDDIQTGKFAKSWILENQANRPEFNAINRRENEHLIEIVGRELRSMMPFVKAKQVEAVVPGAKN.

One can recognise a KARI N-terminal Rossmann domain in the interval 2–181 (AKVYYNGDAN…GAARAGVLET (180 aa)). Residues 25 to 28 (YGSQ), arginine 48, serine 52, and 82 to 85 (DEKQ) contribute to the NADP(+) site. Histidine 107 is an active-site residue. Glycine 133 is a binding site for NADP(+). The KARI C-terminal knotted domain maps to 182–327 (TFKEETETDL…RELRSMMPFV (146 aa)). Mg(2+) is bound by residues aspartate 190, glutamate 194, glutamate 226, and glutamate 230. Serine 251 contacts substrate.

Belongs to the ketol-acid reductoisomerase family. Requires Mg(2+) as cofactor.

The catalysed reaction is (2R)-2,3-dihydroxy-3-methylbutanoate + NADP(+) = (2S)-2-acetolactate + NADPH + H(+). It catalyses the reaction (2R,3R)-2,3-dihydroxy-3-methylpentanoate + NADP(+) = (S)-2-ethyl-2-hydroxy-3-oxobutanoate + NADPH + H(+). The protein operates within amino-acid biosynthesis; L-isoleucine biosynthesis; L-isoleucine from 2-oxobutanoate: step 2/4. It functions in the pathway amino-acid biosynthesis; L-valine biosynthesis; L-valine from pyruvate: step 2/4. Functionally, involved in the biosynthesis of branched-chain amino acids (BCAA). Catalyzes an alkyl-migration followed by a ketol-acid reduction of (S)-2-acetolactate (S2AL) to yield (R)-2,3-dihydroxy-isovalerate. In the isomerase reaction, S2AL is rearranged via a Mg-dependent methyl migration to produce 3-hydroxy-3-methyl-2-ketobutyrate (HMKB). In the reductase reaction, this 2-ketoacid undergoes a metal-dependent reduction by NADPH to yield (R)-2,3-dihydroxy-isovalerate. This is Ketol-acid reductoisomerase (NADP(+)) from Geobacillus kaustophilus (strain HTA426).